A 293-amino-acid polypeptide reads, in one-letter code: Epidermal growth factor-like protein 8 (293 aa).

The signal sequence occupies residues 1 to 28 (MGLWAELCISLRGLSFFLVLMTGEGTRG). The EMI domain maps to 34–112 (SLGVCSKQTL…PHPGALTCDA (79 aa)). 9 disulfides stabilise this stretch: Cys-38/Cys-97, Cys-65/Cys-71, Cys-96/Cys-110, Cys-114/Cys-124, Cys-118/Cys-130, Cys-132/Cys-141, Cys-148/Cys-159, Cys-155/Cys-168, and Cys-170/Cys-183. Residue Asn-50 is glycosylated (N-linked (GlcNAc...) asparagine). The EGF-like 1 domain occupies 111 to 142 (DAICSKPCLNGGVCTGPDRCECAPGWGGKHCH). The region spanning 144-184 (DVDECRASLTLCSHGCLNTLGSFLCSCPHPLVLGLDGRTCA) is the EGF-like 2; calcium-binding domain. Residues 206-235 (SEEERALRWEVAELRGRLEKLEQWATQAGA) adopt a coiled-coil conformation.

In terms of tissue distribution, ubiquitously expressed in brain, kidney, thymus and lung.

Its subcellular location is the secreted. In Mus musculus (Mouse), this protein is Epidermal growth factor-like protein 8 (Egfl8).